A 389-amino-acid chain; its full sequence is Leucine aminopeptidase 1 (389 aa).

An N-terminal signal peptide occupies residues 1–18 (MKSSVLLSLCTAALVAGA). A propeptide spanning residues 19 to 89 (AHPLEPQVVL…INANRLIEKS (71 aa)) is cleaved from the precursor. Asn-99, Asn-156, and Asn-180 each carry an N-linked (GlcNAc...) asparagine glycan. Residues His-188, Asp-207, Glu-246, and Asp-273 each contribute to the Zn(2+) site. An intrachain disulfide couples Cys-322 to Cys-326. Residue His-355 participates in Zn(2+) binding.

The protein belongs to the peptidase M28 family. M28E subfamily. In terms of assembly, monomer. Zn(2+) is required as a cofactor.

The protein localises to the secreted. In terms of biological role, extracellular aminopeptidase that allows assimilation of proteinaceous substrates. In Phaeosphaeria nodorum (strain SN15 / ATCC MYA-4574 / FGSC 10173) (Glume blotch fungus), this protein is Leucine aminopeptidase 1 (LAP1).